A 1635-amino-acid polypeptide reads, in one-letter code: MSTLSQQLSQLGGGSTVDRTWKLKQHSKSLIYEPQVAQDQDFSFIHAVGVEGLRDLVSLDSRFAQFENNLFSDTSIDVDRYVQTQEQNDLLDKAISAFLSLIGPYLMLSPAVKALEWLVRRFHVNQMNAEQLLLCVLPYYDQDIYLRVADVIIKLPPLFVFLNKSKSAAQNPPRNLLIRAFSADMRLFELITEYIVGQTTTKTSYQRQLSFWSQFAIYGLVADKADPERMLEIYLPALAKLVVTIDTDCQIAAYMVLTVLGNKMPLNKEVFNALVETIAANWTQKAIKSGILCITQMYQQKQEPEVLPTSVMTALNKAGFQPSDVVALSQKYKMALFTLGYCMALLRNPDAANFKGLEEIISNTQFGSNESTFLMRYIVDWALAKETNTSVAALAAPVIAKWVTRGETVPELDQLELKLQTVFTEAAVEEMEVEEIQEDVDVESLVEQAKKAASQTTTYFSTKTSENYAELSKIFVQLIERGYTMDKFVSMFSSDIASLTFFARIWASPSPLLARLAAVEAAKTIITAAGEADFQNLIPYTCIALSDASQRVRKAAASFAEVLKSKQNKKPIWGVEKIYTNDCSYLGSGDVTVLLNALSLEECILDESFVIRQVSDMISKKKGYKSAFSTAVLAYLGSHAVSQEIIAIRTSLLTLVTSSEEPIVPTTKVVEPLYINPPNDLAYITELIRTVTDKTGIKFLESLIKNDSPIYDEVCDIVTQRLVKLWPTLKGDAHLGLFRFFVDLSLDKDVPFDSLDVLAHVDVPTKVFISLLDDCKVEQNTTSMDAPSDESTKRRRRSSSSTVRNLLQGKLHHIAERNLRKVSLVLELLVASKTTDDALLGPLFTQLGEILTLGTDSNLPIDYCQSLLADVLLNIIRANQHDGASIDRDIRVDIVVSAIRTASNAQIQNKYLLLVAELATVAPTLVLHSVMPIFTFMGANTLRQDDDFSVHVIEQTVARIVPCLAGNTDKVDMLLVSFVTAFPHIPQHRRVKLFGELVRALDASGTKDALATLLFLFAQKSAELKTARKTSEVSAIAKFCDSLFKLFDASKQLAVVLPYVTLVQELYAIIATDPKTKEKEKKTRRQIFLQVDKELEVSPIDFLVVLLESRILPLQAGLVQSPEALKIAENVLTVLIESQYPELLNVILSLLPLPLFVTVAGRLGSSVYKTVLARFSSGSIEEEDTKASDTLLESLHSLLKSTTDTGDLVLLLQIVETVASGFPKCSDALLVTCAGEAVAQLKNSDDDVFIQAVSVLSSLCLRLGARMIGLFPATISSVLARDSSDNLIALSVLALFATFIKRLPSFMVSSLPKIFEFALKCPADTDTRKQLFVVCVETMDSRVVLQTLCDSWKFVEGFENARLFADTLDLAVAEADKKQIHSKADSLITLCLEAFDSSLKLEANTAARVQNLFIKCLIAIVLKLNDKTFRPLFVKIVDWNTPERSTLLFKIVCRLQENLKSIVTSYYGYIIDLALEILNKASAITPALQRNILSSLYSSFRFDREEFWNNEERFTKISDALGAQFPYLTKVAPENSKLLIKAVVALCELASEDQKKQLNDMMIKLLRQAPLYGSRCFAALFNNVGEEFLPFLPQLVPQIAELLESEDEKVESAVRAELIPAVEEVLGESLDRYLA.

The tract at residues 781 to 803 is disordered; that stretch reads TTSMDAPSDESTKRRRRSSSSTV. 2 consecutive transmembrane segments (helical) span residues 1141 to 1161 and 1288 to 1308; these read PELL…TVAG and IALS…SFMV.

It belongs to the HEATR1/UTP10 family. As to quaternary structure, component of the ribosomal small subunit (SSU) processome.

The protein resides in the nucleus. Its subcellular location is the nucleolus. The protein localises to the membrane. Its function is as follows. Involved in nucleolar processing of pre-18S ribosomal RNA. Involved in ribosome biosynthesis. The polypeptide is U3 small nucleolar RNA-associated protein 10 (Yarrowia lipolytica (strain CLIB 122 / E 150) (Yeast)).